An 86-amino-acid chain; its full sequence is RNA-binding protein Hfq (86 aa).

Positions 12-73 (DIFLNQVRKE…ISTITPQKPV (62 aa)) constitute a Sm domain.

It belongs to the Hfq family. In terms of assembly, homohexamer.

In terms of biological role, RNA chaperone that binds small regulatory RNA (sRNAs) and mRNAs to facilitate mRNA translational regulation in response to envelope stress, environmental stress and changes in metabolite concentrations. Also binds with high specificity to tRNAs. This Thermoanaerobacter pseudethanolicus (strain ATCC 33223 / 39E) (Clostridium thermohydrosulfuricum) protein is RNA-binding protein Hfq.